Reading from the N-terminus, the 605-residue chain is YTH domain-containing protein ECT4 (605 aa).

Disordered regions lie at residues 249-274 (GVASSYSKANNNVPATRNQNSSSNSH) and 357-384 (ELNRGPRAKGTKATEEVSSEEVKKQTFD). Positions 256–274 (KANNNVPATRNQNSSSNSH) are enriched in polar residues. The span at 368-383 (KATEEVSSEEVKKQTF) shows a compositional bias: basic and acidic residues. In terms of domain architecture, YTH spans 414-551 (AKFFIIKSYS…EQGLKVVKIF (138 aa)). RNA-binding positions include 420–422 (KSY), Asp426, 436–437 (WA), Asn469, Trp493, Trp498, and Trp506. Positions 580-605 (KQQQSQKQVWEGKTNDEKPGTVDSTM) are disordered.

Expressed in the shoot apex, at the sites of leaf formation, and in emerging leaves.

Its subcellular location is the cytoplasm. Its function is as follows. Specifically recognizes and binds N6-methyladenosine (m6A)-containing RNAs, and regulates mRNA stability. M6A is a modification present at internal sites of mRNAs and some non-coding RNAs and plays a role in mRNA stability and processing. Required for the correct timing of leaf formation and normal leaf morphology. This Arabidopsis thaliana (Mouse-ear cress) protein is YTH domain-containing protein ECT4.